Here is a 270-residue protein sequence, read N- to C-terminus: HTH-type transcriptional activator AllS (270 aa).

Residues 4–61 enclose the HTH lysR-type domain; sequence LDPETLRTFVSVAETGSFSRAAEKLYKTTATISYRIKLLEDNTGVALFSRTTRSVLLT. The H-T-H motif DNA-binding region spans 21–40; that stretch reads FSRAAEKLYKTTATISYRIK.

This sequence belongs to the LysR transcriptional regulatory family.

Functionally, positive regulator essential for the expression of allD operon. Binds to the allD promoter. This chain is HTH-type transcriptional activator AllS (allS), found in Klebsiella pneumoniae.